A 387-amino-acid polypeptide reads, in one-letter code: Chorismate synthase (387 aa).

Arg-40 and Arg-46 together coordinate NADP(+). Residues 129-131 (RSS), 250-251 (QA), Gly-295, 310-314 (KPIPT), and Arg-336 each bind FMN.

It belongs to the chorismate synthase family. Homotetramer. FMNH2 serves as cofactor.

The enzyme catalyses 5-O-(1-carboxyvinyl)-3-phosphoshikimate = chorismate + phosphate. Its pathway is metabolic intermediate biosynthesis; chorismate biosynthesis; chorismate from D-erythrose 4-phosphate and phosphoenolpyruvate: step 7/7. Functionally, catalyzes the anti-1,4-elimination of the C-3 phosphate and the C-6 proR hydrogen from 5-enolpyruvylshikimate-3-phosphate (EPSP) to yield chorismate, which is the branch point compound that serves as the starting substrate for the three terminal pathways of aromatic amino acid biosynthesis. This reaction introduces a second double bond into the aromatic ring system. The sequence is that of Chorismate synthase from Desulforamulus reducens (strain ATCC BAA-1160 / DSM 100696 / MI-1) (Desulfotomaculum reducens).